The primary structure comprises 220 residues: SAGA-associated factor 11 homolog (220 aa).

The disordered stretch occupies residues 1 to 38 (MSTGTANSAVSSKSTNSTTSTSKVPVNEKSNNSQNANT). The SGF11-type zinc-finger motif lies at 126–147 (CTCPNCDRPVSAARFAPHLEKC). 2 stretches are compositionally biased toward low complexity: residues 160–177 (RRLA…SSSS) and 204–220 (SQNS…GKTF). The interval 160 to 220 (RRLATKESNS…GSKKNNGKTF (61 aa)) is disordered.

It belongs to the SGF11 family. As to quaternary structure, component of some SAGA transcription coactivator-HAT complexes. Within the SAGA complex, participates in a subcomplex of SAGA called the DUB module (deubiquitination module).

The protein localises to the nucleus. Functionally, component of the transcription regulatory histone acetylation (HAT) complex SAGA, a multiprotein complex that activates transcription by remodeling chromatin and mediating histone acetylation and deubiquitination. Within the SAGA complex, participates in a subcomplex that specifically deubiquitinates histone H2B. The SAGA complex is recruited to specific gene promoters by activators, where it is required for transcription. In Musca domestica (House fly), this protein is SAGA-associated factor 11 homolog.